The sequence spans 432 residues: Ectonucleoside triphosphate diphosphohydrolase 5 (432 aa).

A signal peptide spans 1–24 (MALYQGAAFFMLVASCVCSTVFHR). Catalysis depends on Glu-175, which acts as the Proton acceptor. Asn-235 carries N-linked (GlcNAc...) asparagine glycosylation. 2 disulfide bridges follow: Cys-275–Cys-307 and Cys-367–Cys-381. Asn-372 carries N-linked (GlcNAc...) asparagine glycosylation.

Belongs to the GDA1/CD39 NTPase family. In terms of assembly, monomer; active form. Homodimer; disulfide-linked. Homodimers are enzymatically inactive. The cofactor is Ca(2+). Requires Mg(2+) as cofactor. N-glycosylated; high-mannose type.

Its subcellular location is the endoplasmic reticulum. The protein localises to the secreted. It carries out the reaction a ribonucleoside 5'-diphosphate + H2O = a ribonucleoside 5'-phosphate + phosphate + H(+). The enzyme catalyses GDP + H2O = GMP + phosphate + H(+). The catalysed reaction is UDP + H2O = UMP + phosphate + H(+). It catalyses the reaction IDP + H2O = IMP + phosphate + H(+). It carries out the reaction CDP + H2O = CMP + phosphate + H(+). The enzyme catalyses ADP + H2O = AMP + phosphate + H(+). It participates in protein modification; protein glycosylation. In terms of biological role, hydrolyzes nucleoside diphosphates with a preference for GDP, IDP and UDP compared to ADP and CDP. In the lumen of the endoplasmic reticulum, hydrolyzes UDP that acts as an end-product feedback inhibitor of the UDP-Glc:glycoprotein glucosyltransferases. UMP can be transported back by an UDP-sugar antiporter to the cytosol where it is consumed to regenerate UDP-glucose. Therefore, it positively regulates protein reglucosylation by clearing UDP from the ER lumen and by promoting the regeneration of UDP-glucose. Protein reglucosylation is essential to proper glycoprotein folding and quality control in the ER. The polypeptide is Ectonucleoside triphosphate diphosphohydrolase 5 (ENTPD5) (Bos taurus (Bovine)).